Reading from the N-terminus, the 959-residue chain is Isoleucine--tRNA ligase (959 aa).

Residues 60–70 carry the 'HIGH' region motif; the sequence is PYANGSLHMGH. L-isoleucyl-5'-AMP is bound at residue glutamate 569. Positions 610–614 match the 'KMSKS' region motif; the sequence is KMSKS. Position 613 (lysine 613) interacts with ATP. Zn(2+)-binding residues include cysteine 928, cysteine 931, cysteine 948, and cysteine 951.

It belongs to the class-I aminoacyl-tRNA synthetase family. IleS type 1 subfamily. As to quaternary structure, monomer. It depends on Zn(2+) as a cofactor.

It localises to the cytoplasm. It catalyses the reaction tRNA(Ile) + L-isoleucine + ATP = L-isoleucyl-tRNA(Ile) + AMP + diphosphate. Its function is as follows. Catalyzes the attachment of isoleucine to tRNA(Ile). As IleRS can inadvertently accommodate and process structurally similar amino acids such as valine, to avoid such errors it has two additional distinct tRNA(Ile)-dependent editing activities. One activity is designated as 'pretransfer' editing and involves the hydrolysis of activated Val-AMP. The other activity is designated 'posttransfer' editing and involves deacylation of mischarged Val-tRNA(Ile). In Rippkaea orientalis (strain PCC 8801 / RF-1) (Cyanothece sp. (strain PCC 8801)), this protein is Isoleucine--tRNA ligase.